A 362-amino-acid chain; its full sequence is Atypical chemokine receptor 3 (362 aa).

At 1-47 the chain is on the extracellular side; that stretch reads MDVHLFDYAEPGNYSDINWPCNSSDCIVVDTVQCPTMPNKNVLLYTL. 2 N-linked (GlcNAc...) asparagine glycosylation sites follow: asparagine 13 and asparagine 22. The chain crosses the membrane as a helical span at residues 48–68; it reads SFIYIFIFVIGMIANSVVVWV. Residues 69–81 lie on the Cytoplasmic side of the membrane; that stretch reads NIQAKTTGYDTHC. The chain crosses the membrane as a helical span at residues 82 to 102; it reads YILNLAIADLWVVITIPVWVV. The Extracellular segment spans residues 103 to 118; it reads SLVQHNQWPMGELTCK. Cysteine 117 and cysteine 196 are joined by a disulfide. Residues 119 to 139 traverse the membrane as a helical segment; that stretch reads ITHLIFSINLFGSIFFLACMS. The Cytoplasmic portion of the chain corresponds to 140-162; sequence VDRYLSITYFTGTSSYKKKMVRR. A helical transmembrane segment spans residues 163 to 183; the sequence is VVCILVWLLAFFVSLPDTYYL. Over 184 to 213 the chain is Extracellular; that stretch reads KTVTSASNNETYCRSFYPEHSIKEWLIGME. A helical membrane pass occupies residues 214 to 234; that stretch reads LVSVILGFAVPFTIIAIFYFL. The Cytoplasmic portion of the chain corresponds to 235–252; that stretch reads LARAMSASGDQEKHSSRK. The chain crosses the membrane as a helical span at residues 253–273; it reads IIFSYVVVFLVCWLPYHFVVL. The Extracellular portion of the chain corresponds to 274-296; sequence LDIFSILHYIPFTCQLENVLFTA. A helical membrane pass occupies residues 297–319; the sequence is LHVTQCLSLVHCCVNPVLYSFIN. Over 320-362 the chain is Cytoplasmic; the sequence is RNYRYELMKAFIFKYSAKTGLTKLIDASRVSETEYSALEQNTK. Residues 324 to 362 form a C-terminal cytoplasmic tail region; it reads YELMKAFIFKYSAKTGLTKLIDASRVSETEYSALEQNTK. 3 positions are modified to phosphoserine: serine 347, serine 350, and serine 355.

Belongs to the G-protein coupled receptor 1 family. Atypical chemokine receptor subfamily. In terms of assembly, homodimer. Can form heterodimers with CXCR4; heterodimerization may regulate CXCR4 signaling activity. Interacts with ARRB1 and ARRB2. The Ser/Thr residues in the C-terminal cytoplasmic tail may be phosphorylated. In terms of processing, ubiquitinated at the Lys residues in its C-terminal cytoplasmic tail and is essential for correct trafficking from and to the cell membrane. Deubiquitinated by CXCL12-stimulation in a reversible manner. As to expression, not detected in blood, liver, lung and heart, but high expression detected in several tumor cell lines (at protein level). Expressed in heart, spleen, kidney, lung, ovary, brain, testis, astrocytes, neutrophils and B-lymphocytes.

The protein resides in the cell membrane. It localises to the early endosome. The protein localises to the recycling endosome. In terms of biological role, atypical chemokine receptor that controls chemokine levels and localization via high-affinity chemokine binding that is uncoupled from classic ligand-driven signal transduction cascades, resulting instead in chemokine sequestration, degradation, or transcytosis. Also known as interceptor (internalizing receptor) or chemokine-scavenging receptor or chemokine decoy receptor. Acts as a receptor for chemokines CXCL11 and CXCL12/SDF1. Chemokine binding does not activate G-protein-mediated signal transduction but instead induces beta-arrestin recruitment, leading to ligand internalization and activation of MAPK signaling pathway. Required for regulation of CXCR4 protein levels in migrating interneurons, thereby adapting their chemokine responsiveness. In glioma cells, transduces signals via MEK/ERK pathway, mediating resistance to apoptosis. Promotes cell growth and survival. Not involved in cell migration, adhesion or proliferation of normal hematopoietic progenitors but activated by CXCL11 in malignant hemapoietic cells, leading to phosphorylation of ERK1/2 (MAPK3/MAPK1) and enhanced cell adhesion and migration. Plays a regulatory role in CXCR4-mediated activation of cell surface integrins by CXCL12. Required for heart valve development. Regulates axon guidance in the oculomotor system through the regulation of CXCL12 levels. The protein is Atypical chemokine receptor 3 of Mus musculus (Mouse).